The sequence spans 359 residues: Membrane-bound lytic murein transglycosylase C (359 aa).

A signal peptide spans 1–16 (MKKYLALALIAPLLIS). A lipid anchor (N-palmitoyl cysteine) is attached at Cys17. Cys17 carries the S-diacylglycerol cysteine lipid modification.

The protein belongs to the transglycosylase Slt family.

It is found in the cell outer membrane. It catalyses the reaction Exolytic cleavage of the (1-&gt;4)-beta-glycosidic linkage between N-acetylmuramic acid (MurNAc) and N-acetylglucosamine (GlcNAc) residues in peptidoglycan, from either the reducing or the non-reducing ends of the peptidoglycan chains, with concomitant formation of a 1,6-anhydrobond in the MurNAc residue.. Murein-degrading enzyme. May play a role in recycling of muropeptides during cell elongation and/or cell division. This Shigella flexneri serotype 5b (strain 8401) protein is Membrane-bound lytic murein transglycosylase C.